Here is a 135-residue protein sequence, read N- to C-terminus: Cofilin-4 (135 aa).

The 133-residue stretch at 3-135 (SCASINDEVI…SQSLVEERCK (133 aa)) folds into the ADF-H domain.

It belongs to the actin-binding proteins ADF family.

It localises to the cytoplasm. Its subcellular location is the cytoskeleton. Functionally, controls actin polymerization and depolymerization. This chain is Cofilin-4 (cofE), found in Dictyostelium discoideum (Social amoeba).